Reading from the N-terminus, the 165-residue chain is MATLLFDDGREATAAEIEAIARAHRIVVEHRPVPAALAETLARPLLDDTSAATVLDALPPRPEFPSRDLIVLHPDRPDNEQLATKFENWHRHAGDEIRHILDGAGIFGVIVDGQRADLHVGPGDFIVVPAGLEHNFRLTAARRIKAVRYLSDAEGWSAEFTGRAA.

Fe(2+)-binding residues include His-90, His-92, Glu-96, and His-134. Ni(2+) is bound by residues His-90, His-92, Glu-96, and His-134.

It belongs to the acireductone dioxygenase (ARD) family. Monomer. Fe(2+) is required as a cofactor. Requires Ni(2+) as cofactor.

The enzyme catalyses 1,2-dihydroxy-5-(methylsulfanyl)pent-1-en-3-one + O2 = 3-(methylsulfanyl)propanoate + CO + formate + 2 H(+). It catalyses the reaction 1,2-dihydroxy-5-(methylsulfanyl)pent-1-en-3-one + O2 = 4-methylsulfanyl-2-oxobutanoate + formate + 2 H(+). It functions in the pathway amino-acid biosynthesis; L-methionine biosynthesis via salvage pathway; L-methionine from S-methyl-5-thio-alpha-D-ribose 1-phosphate: step 5/6. Its function is as follows. Catalyzes 2 different reactions between oxygen and the acireductone 1,2-dihydroxy-3-keto-5-methylthiopentene (DHK-MTPene) depending upon the metal bound in the active site. Fe-containing acireductone dioxygenase (Fe-ARD) produces formate and 2-keto-4-methylthiobutyrate (KMTB), the alpha-ketoacid precursor of methionine in the methionine recycle pathway. Ni-containing acireductone dioxygenase (Ni-ARD) produces methylthiopropionate, carbon monoxide and formate, and does not lie on the methionine recycle pathway. The protein is Acireductone dioxygenase of Rhodopseudomonas palustris (strain ATCC BAA-98 / CGA009).